We begin with the raw amino-acid sequence, 291 residues long: Hydroxysteroid 11-beta-dehydrogenase 1-like protein B (291 aa).

The N-terminal stretch at 1–17 (MAGVILLLLSLCVGYIA) is a signal peptide. Residues 40 to 66 (GSST…TARR), 91 to 92 (DM), and 118 to 120 (NHI) contribute to the NADP(+) site. Ser-170 lines the substrate pocket. Residue Tyr-183 is the Proton acceptor of the active site. NADP(+)-binding positions include 183–187 (YCASK) and 216–222 (GYIDTEN).

It belongs to the short-chain dehydrogenases/reductases (SDR) family.

It is found in the secreted. It catalyses the reaction cortisone + NADPH + H(+) = cortisol + NADP(+). Functionally, unidirectional NADP(+)-dependent cortisol dehydrogenase (in vitro). This is Hydroxysteroid 11-beta-dehydrogenase 1-like protein B (hsd11b1l-b) from Xenopus laevis (African clawed frog).